Reading from the N-terminus, the 165-residue chain is Pro-MCH (165 aa).

Positions Met1–Gly21 are cleaved as a signal peptide. Isoleucine amide is present on Ile143. A disulfide bridge connects residues Cys153 and Cys162.

The protein belongs to the melanin-concentrating hormone family. Post-translationally, differentially processed in the brain and in peripheral organs producing two neuropeptides; NEI and MCH. A third peptide, NGE, may also be produced. Preferential processing in neurons by prohormone convertase 2 (PC2) generates NEI. MCH is generated in neurons of the lateral hypothalmic area by several prohormone convertases including PC1/3, PC2 and PC5/6. As to expression, predominantly expressed in lateral hypothalamus, also detected in pallidum, neocortex and cerebellum. Also found in thymus, brown adipose tissue, duodenum and testis (spermatogonia, early spermatocytes and Sertoli cells). No expression in peripheral blood. In brain exclusively mature MCH and NEI peptides are present. In peripheral tissues a large product, encompassing the NEI and MCH domains of the precursor, is found predominantly.

Its subcellular location is the secreted. In terms of biological role, MCH may act as a neurotransmitter or neuromodulator in a broad array of neuronal functions directed toward the regulation of goal-directed behavior, such as food intake, and general arousal. May also have a role in spermatocyte differentiation. The sequence is that of Pro-MCH (PMCH) from Homo sapiens (Human).